The following is a 402-amino-acid chain: Multidrug resistance protein MdtH (402 aa).

Over 1–12 (MSRVSQARNLGK) the chain is Cytoplasmic. Residues 13–33 (YFLLIDNMLVVLGFFVVFPLI) form a helical membrane-spanning segment. At 34 to 98 (SIRFVDQMGW…GFATMGIAHE (65 aa)) the chain is on the periplasmic side. A helical membrane pass occupies residues 99–116 (PWLLWFSCLLSGLGGTLF). The Cytoplasmic segment spans residues 117–138 (DPPRSALVVKLIRPQQRGRFFS). A helical transmembrane segment spans residues 139-159 (LLMMQDSASAVIGALLGSWLL). The Periplasmic portion of the chain corresponds to 160-164 (QYDFR). A helical transmembrane segment spans residues 165–185 (LVCATGPVLFVLCAAFNAWLL). Residues 186 to 213 (PAWKLSTVRTPVREGMTRVMRDKRFVTY) are Cytoplasmic-facing. Residues 214-234 (VLTLAGYYMLAVQVMLMLPIM) form a helical membrane-spanning segment. Topologically, residues 235-243 (VNDVAGAPS) are periplasmic. A helical transmembrane segment spans residues 244–264 (AVKWMYAIEACLSLTLLYPIA). The Cytoplasmic segment spans residues 265 to 276 (RWSEKHFRLEHR). Residues 277-297 (LMAGLLIMSLSMMPVGMVSGL) form a helical membrane-spanning segment. At 298–299 (QQ) the chain is on the periplasmic side. A helical transmembrane segment spans residues 300-320 (LFTLICLFYIGSIIAEPARET). At 321–339 (LSASLADARARGSYMGFSR) the chain is on the cytoplasmic side. The chain crosses the membrane as a helical span at residues 340 to 360 (LGLAIGGAIGYIGGGWLFDLG). At 361-367 (KSAHQPE) the chain is on the periplasmic side. The helical transmembrane segment at 368–388 (LPWMMLGIIGIFTFLALGWQF) threads the bilayer. Residues 389 to 402 (SQKRAARRLLERDA) are Cytoplasmic-facing.

The protein belongs to the major facilitator superfamily. DHA1 family. MdtH (TC 2.A.1.2.21) subfamily.

It localises to the cell inner membrane. The chain is Multidrug resistance protein MdtH from Shigella flexneri serotype 5b (strain 8401).